A 186-amino-acid chain; its full sequence is dCTP deaminase, dUMP-forming (186 aa).

DCTP is bound by residues 99 to 104 (KSSIAR), Asp117, 125 to 127 (TLE), Gln146, Tyr159, Lys166, and Gln170. Glu127 functions as the Proton donor/acceptor in the catalytic mechanism.

Belongs to the dCTP deaminase family. Homotrimer.

The enzyme catalyses dCTP + 2 H2O = dUMP + NH4(+) + diphosphate. It participates in pyrimidine metabolism; dUMP biosynthesis; dUMP from dCTP: step 1/1. In terms of biological role, bifunctional enzyme that catalyzes both the deamination of dCTP to dUTP and the hydrolysis of dUTP to dUMP without releasing the toxic dUTP intermediate. In Methanosphaerula palustris (strain ATCC BAA-1556 / DSM 19958 / E1-9c), this protein is dCTP deaminase, dUMP-forming.